Consider the following 1199-residue polypeptide: Tubulin monoglutamylase TTLL4 (1199 aa).

Residues 1-25 (MASAGTQHYSIGLRQKNSFKQSGPS) show a composition bias toward polar residues. Disordered regions lie at residues 1 to 43 (MASA…RVWP), 472 to 517 (IQLG…ELVD), and 525 to 544 (RDEN…SAVS). A compositionally biased stretch (basic and acidic residues) spans 477 to 495 (SEKERPEEARELDSSDRDI). The span at 506-517 (AETEDTEEELVD) shows a compositional bias: acidic residues. The 344-residue stretch at 604 to 947 (RKLLRWKMST…VLPNAEDIIS (344 aa)) folds into the TTL domain. Residue Ser691 is modified to Phosphoserine. ATP-binding positions include Lys721, 727-728 (RG), 749-752 (QRYL), and 762-764 (KFD). Arg727 serves as a coordination point for a protein. Arg788 is an L-glutamate binding site. Residue 809 to 810 (TN) participates in ATP binding. L-glutamate is bound by residues Tyr811, Ser812, and Lys833. Mg(2+) contacts are provided by Asp893, Glu906, and Asn908. The c-MTBD region stretch occupies residues 918 to 1029 (PLDISIKGQM…RGQFERIFPS (112 aa)). Lys924 contributes to the L-glutamate binding site. The span at 1130 to 1141 (GTTPKSKKTQAG) shows a compositional bias: polar residues. The segment at 1130 to 1199 (GTTPKSKKTQ…ISDSLLAVSP (70 aa)) is disordered. The span at 1151–1160 (SSKDSEDTSK) shows a compositional bias: basic and acidic residues. A compositionally biased stretch (polar residues) spans 1164–1192 (LSTQTLPVIKCSGQTSRLSASSTFQSISD).

This sequence belongs to the tubulin--tyrosine ligase family. Mg(2+) serves as cofactor.

The protein localises to the cytoplasm. The protein resides in the cell projection. It localises to the cilium. Its subcellular location is the cytoskeleton. It is found in the cilium basal body. It carries out the reaction L-glutamyl-[protein] + L-glutamate + ATP = gamma-L-glutamyl-L-glutamyl-[protein] + ADP + phosphate + H(+). Monoglutamylase which modifies both tubulin and non-tubulin proteins, adding a single glutamate on the gamma-carboxyl group of specific glutamate residues of target proteins. Involved in the side-chain initiation step of the polyglutamylation reaction but not in the elongation step. Preferentially modifies beta-tail tubulin over the alpha-tubulin. Monoglutamylates nucleosome assembly proteins NAP1L1 and NAP1L4. Monoglutamylates nucleotidyltransferase CGAS, leading to inhibition of CGAS catalytic activity, thereby preventing antiviral defense function. Involved in KLF4 glutamylation which impedes its ubiquitination, thereby leading to somatic cell reprogramming, pluripotency maintenance and embryogenesis. This chain is Tubulin monoglutamylase TTLL4, found in Homo sapiens (Human).